A 429-amino-acid chain; its full sequence is Putative pentatricopeptide repeat-containing protein At1g03510 (429 aa).

PPR repeat units follow at residues 11–45 (KLIS…FALP), 47–81 (DAHV…NFLS), 82–112 (NPFV…IPQR), 113–147 (NAVV…PNES), 148–180 (SFNA…RFKP), 181–215 (NLIT…LIEP), 216–246 (HPQL…MEDR), 247–281 (DVVA…KVTP), 282–312 (DDIA…MQGD), and 318–348 (SKDH…MPEK). The interval 353 to 428 (TWGALLGACR…SPGSSWCLFK (76 aa)) is type E motif.

The protein belongs to the PPR family. PCMP-E subfamily.

The protein is Putative pentatricopeptide repeat-containing protein At1g03510 (PCMP-E3) of Arabidopsis thaliana (Mouse-ear cress).